The following is a 115-amino-acid chain: Large ribosomal subunit protein bL19 (115 aa).

The protein belongs to the bacterial ribosomal protein bL19 family.

In terms of biological role, this protein is located at the 30S-50S ribosomal subunit interface and may play a role in the structure and function of the aminoacyl-tRNA binding site. This Desulfovibrio desulfuricans (strain ATCC 27774 / DSM 6949 / MB) protein is Large ribosomal subunit protein bL19.